The chain runs to 276 residues: Aldo-keto reductase Mjls_1919 (276 aa).

Y50 functions as the Proton donor in the catalytic mechanism. NADPH-binding residues include L190, I228, K230, S231, V232, R236, S239, and N240.

It belongs to the aldo/keto reductase family.

The sequence is that of Aldo-keto reductase Mjls_1919 from Mycobacterium sp. (strain JLS).